A 364-amino-acid chain; its full sequence is Protein-glutamate methylesterase/protein-glutamine glutaminase (364 aa).

The Response regulatory domain occupies 7 to 124; sequence RALIVDDSAL…SQNMPDMAEE (118 aa). Residue Asp58 is modified to 4-aspartylphosphate. The CheB-type methylesterase domain maps to 167–364; the sequence is ETTSFVRNVL…MAEEIVKIIS (198 aa). Active-site residues include Ser181, His208, and Asp308.

The protein belongs to the CheB family. Phosphorylated by CheA. Phosphorylation of the N-terminal regulatory domain activates the methylesterase activity.

The protein localises to the cytoplasm. The enzyme catalyses [protein]-L-glutamate 5-O-methyl ester + H2O = L-glutamyl-[protein] + methanol + H(+). The catalysed reaction is L-glutaminyl-[protein] + H2O = L-glutamyl-[protein] + NH4(+). Its function is as follows. Involved in chemotaxis. Part of a chemotaxis signal transduction system that modulates chemotaxis in response to various stimuli. Catalyzes the demethylation of specific methylglutamate residues introduced into the chemoreceptors (methyl-accepting chemotaxis proteins or MCP) by CheR. Also mediates the irreversible deamidation of specific glutamine residues to glutamic acid. This chain is Protein-glutamate methylesterase/protein-glutamine glutaminase, found in Methanosarcina barkeri (strain Fusaro / DSM 804).